We begin with the raw amino-acid sequence, 161 residues long: 6,7-dimethyl-8-ribityllumazine synthase (161 aa).

5-amino-6-(D-ribitylamino)uracil contacts are provided by residues tryptophan 25, 57–59 (AFE), and 80–82 (VVI). A (2S)-2-hydroxy-3-oxobutyl phosphate-binding site is contributed by 85 to 86 (GT). Catalysis depends on histidine 88, which acts as the Proton donor. 5-amino-6-(D-ribitylamino)uracil is bound at residue phenylalanine 113. Position 127 (arginine 127) interacts with (2S)-2-hydroxy-3-oxobutyl phosphate.

The protein belongs to the DMRL synthase family.

The enzyme catalyses (2S)-2-hydroxy-3-oxobutyl phosphate + 5-amino-6-(D-ribitylamino)uracil = 6,7-dimethyl-8-(1-D-ribityl)lumazine + phosphate + 2 H2O + H(+). The protein operates within cofactor biosynthesis; riboflavin biosynthesis; riboflavin from 2-hydroxy-3-oxobutyl phosphate and 5-amino-6-(D-ribitylamino)uracil: step 1/2. In terms of biological role, catalyzes the formation of 6,7-dimethyl-8-ribityllumazine by condensation of 5-amino-6-(D-ribitylamino)uracil with 3,4-dihydroxy-2-butanone 4-phosphate. This is the penultimate step in the biosynthesis of riboflavin. This chain is 6,7-dimethyl-8-ribityllumazine synthase, found in Kineococcus radiotolerans (strain ATCC BAA-149 / DSM 14245 / SRS30216).